Consider the following 83-residue polypeptide: ATP synthase subunit c (83 aa).

2 helical membrane passes run 10-30 (IAVALLIGMGALGTAIGFGLL) and 52-72 (MFIVAGLLDAVTMIGVGIALY).

The protein belongs to the ATPase C chain family. As to quaternary structure, F-type ATPases have 2 components, F(1) - the catalytic core - and F(0) - the membrane proton channel. F(1) has five subunits: alpha(3), beta(3), gamma(1), delta(1), epsilon(1). F(0) has three main subunits: a(1), b(2) and c(10-14). The alpha and beta chains form an alternating ring which encloses part of the gamma chain. F(1) is attached to F(0) by a central stalk formed by the gamma and epsilon chains, while a peripheral stalk is formed by the delta and b chains.

It localises to the cell inner membrane. Its function is as follows. F(1)F(0) ATP synthase produces ATP from ADP in the presence of a proton or sodium gradient. F-type ATPases consist of two structural domains, F(1) containing the extramembraneous catalytic core and F(0) containing the membrane proton channel, linked together by a central stalk and a peripheral stalk. During catalysis, ATP synthesis in the catalytic domain of F(1) is coupled via a rotary mechanism of the central stalk subunits to proton translocation. Key component of the F(0) channel; it plays a direct role in translocation across the membrane. A homomeric c-ring of between 10-14 subunits forms the central stalk rotor element with the F(1) delta and epsilon subunits. In Shewanella denitrificans (strain OS217 / ATCC BAA-1090 / DSM 15013), this protein is ATP synthase subunit c.